An 890-amino-acid polypeptide reads, in one-letter code: UPF0182 protein SYNW1212 (890 aa).

The next 8 helical transmembrane spans lie at 21 to 41 (WLLQ…AIRW), 64 to 84 (LTLL…NGLI), 98 to 118 (WQVS…LVAV), 134 to 154 (AVVL…SIPL), 173 to 193 (FAAL…CLGN), 219 to 239 (RLLM…CWLS), 268 to 288 (LLTV…SLLL), and 295 to 315 (VLAV…WLIL).

Belongs to the UPF0182 family.

It is found in the cell membrane. This Parasynechococcus marenigrum (strain WH8102) protein is UPF0182 protein SYNW1212.